We begin with the raw amino-acid sequence, 264 residues long: tRNA pseudouridine synthase A (264 aa).

The active-site Nucleophile is the aspartate 51. Residue tyrosine 109 participates in substrate binding.

This sequence belongs to the tRNA pseudouridine synthase TruA family. As to quaternary structure, homodimer.

The enzyme catalyses uridine(38/39/40) in tRNA = pseudouridine(38/39/40) in tRNA. Functionally, formation of pseudouridine at positions 38, 39 and 40 in the anticodon stem and loop of transfer RNAs. This Polaromonas sp. (strain JS666 / ATCC BAA-500) protein is tRNA pseudouridine synthase A.